The sequence spans 99 residues: Integration host factor subunit alpha (99 aa).

The interval phenylalanine 49–isoleucine 73 is disordered.

This sequence belongs to the bacterial histone-like protein family. In terms of assembly, heterodimer of an alpha and a beta chain.

Its function is as follows. This protein is one of the two subunits of integration host factor, a specific DNA-binding protein that functions in genetic recombination as well as in transcriptional and translational control. This Shigella boydii serotype 18 (strain CDC 3083-94 / BS512) protein is Integration host factor subunit alpha.